The primary structure comprises 318 residues: Isoeugenol synthase 1 (318 aa).

Residues 10 to 13 (TGYI), 32 to 43 (ARPLTPDSTPSS), Arg33, 84 to 86 (VPM), 109 to 111 (SEF), Lys131, and 151 to 153 (NCF) contribute to the NADP(+) site. Lys131 serves as the catalytic Proton donor/acceptor. Residue Pro260 coordinates substrate.

The protein belongs to the NmrA-type oxidoreductase family. As to expression, mostly expressed in petals, and, to a lower extent, in sepals, stamens and pistils.

It catalyses the reaction (E)-isoeugenol + acetate + NADP(+) = (E)-coniferyl acetate + NADPH. It functions in the pathway aromatic compound metabolism; phenylpropanoid biosynthesis. In terms of biological role, catalyzes the synthesis of the phenylpropene isoeugenol from coniferyl acetate. Phenylpropenes are the primary constituents of various essential plant oils. They are produced as antimicrobial and antianimal compounds, or as floral attractants of pollinators. Isoeugenol is a characteristic aromatic constituent of spices and a floral volatile compound. The protein is Isoeugenol synthase 1 of Clarkia breweri (Fairy fans).